A 541-amino-acid chain; its full sequence is Eukaryotic translation initiation factor 3 subunit L (541 aa).

Residues 308-516 (TFSDILLYIQ…IHIADTKVSH (209 aa)) enclose the PCI domain.

It belongs to the eIF-3 subunit L family. As to quaternary structure, component of the eukaryotic translation initiation factor 3 (eIF-3) complex. The eIF-3 complex interacts with pix.

The protein localises to the cytoplasm. Functionally, component of the eukaryotic translation initiation factor 3 (eIF-3) complex, which is involved in protein synthesis of a specialized repertoire of mRNAs and, together with other initiation factors, stimulates binding of mRNA and methionyl-tRNAi to the 40S ribosome. The eIF-3 complex specifically targets and initiates translation of a subset of mRNAs involved in cell proliferation. In Drosophila persimilis (Fruit fly), this protein is Eukaryotic translation initiation factor 3 subunit L.